A 159-amino-acid chain; its full sequence is 2-C-methyl-D-erythritol 2,4-cyclodiphosphate synthase (159 aa).

2 residues coordinate a divalent metal cation: aspartate 8 and histidine 10. 4-CDP-2-C-methyl-D-erythritol 2-phosphate is bound by residues 8–10 (DVH) and 34–35 (HS). Histidine 42 is a binding site for a divalent metal cation. 4-CDP-2-C-methyl-D-erythritol 2-phosphate contacts are provided by residues 56–58 (DIG), 61–65 (FPDTD), 100–106 (AQAPKMA), 132–135 (TTSE), phenylalanine 139, and arginine 142.

Belongs to the IspF family. As to quaternary structure, homotrimer. A divalent metal cation is required as a cofactor.

The enzyme catalyses 4-CDP-2-C-methyl-D-erythritol 2-phosphate = 2-C-methyl-D-erythritol 2,4-cyclic diphosphate + CMP. Its pathway is isoprenoid biosynthesis; isopentenyl diphosphate biosynthesis via DXP pathway; isopentenyl diphosphate from 1-deoxy-D-xylulose 5-phosphate: step 4/6. In terms of biological role, involved in the biosynthesis of isopentenyl diphosphate (IPP) and dimethylallyl diphosphate (DMAPP), two major building blocks of isoprenoid compounds. Catalyzes the conversion of 4-diphosphocytidyl-2-C-methyl-D-erythritol 2-phosphate (CDP-ME2P) to 2-C-methyl-D-erythritol 2,4-cyclodiphosphate (ME-CPP) with a corresponding release of cytidine 5-monophosphate (CMP). The chain is 2-C-methyl-D-erythritol 2,4-cyclodiphosphate synthase from Aliivibrio salmonicida (strain LFI1238) (Vibrio salmonicida (strain LFI1238)).